A 187-amino-acid chain; its full sequence is ATP synthase subunit b 2 (187 aa).

The interval 1-25 (MAESHGGAKGPAAGAHTGAEGGHGG) is disordered. Residues 39 to 59 (LVSLAIFFVVLYVIVSKLALP) traverse the membrane as a helical segment. A disordered region spans residues 103–122 (RAQAIGNESRDKANAQAETE). The segment covering 110 to 122 (ESRDKANAQAETE) has biased composition (basic and acidic residues).

This sequence belongs to the ATPase B chain family. As to quaternary structure, F-type ATPases have 2 components, F(1) - the catalytic core - and F(0) - the membrane proton channel. F(1) has five subunits: alpha(3), beta(3), gamma(1), delta(1), epsilon(1). F(0) has three main subunits: a(1), b(2) and c(10-14). The alpha and beta chains form an alternating ring which encloses part of the gamma chain. F(1) is attached to F(0) by a central stalk formed by the gamma and epsilon chains, while a peripheral stalk is formed by the delta and b chains.

It localises to the cell inner membrane. Its function is as follows. F(1)F(0) ATP synthase produces ATP from ADP in the presence of a proton or sodium gradient. F-type ATPases consist of two structural domains, F(1) containing the extramembraneous catalytic core and F(0) containing the membrane proton channel, linked together by a central stalk and a peripheral stalk. During catalysis, ATP synthesis in the catalytic domain of F(1) is coupled via a rotary mechanism of the central stalk subunits to proton translocation. Component of the F(0) channel, it forms part of the peripheral stalk, linking F(1) to F(0). The b'-subunit is a diverged and duplicated form of b found in plants and photosynthetic bacteria. The sequence is that of ATP synthase subunit b 2 (atpF2) from Bradyrhizobium diazoefficiens (strain JCM 10833 / BCRC 13528 / IAM 13628 / NBRC 14792 / USDA 110).